The sequence spans 357 residues: 4-hydroxymandelate oxidase (357 aa).

Residues Met-1–Val-357 enclose the FMN hydroxy acid dehydrogenase domain. Gln-126 is an FMN binding site. Tyr-128 contacts a 2-oxocarboxylate. FMN is bound at residue Thr-154. Arg-163 serves as a coordination point for a 2-oxocarboxylate. Residue Lys-228 coordinates FMN. The Proton acceptor role is filled by His-252. Arg-255 provides a ligand contact to a 2-oxocarboxylate. FMN-binding positions include Asp-283 to Arg-287 and Gly-306 to Arg-307.

Belongs to the FMN-dependent alpha-hydroxy acid dehydrogenase family. Requires FMN as cofactor.

It catalyses the reaction (S)-4-hydroxymandelate + O2 = 4-hydroxyphenylglyoxylate + H2O2. The protein operates within antibiotic biosynthesis; vancomycin biosynthesis. Catalyzes the oxidation of p-hydroxymandelate to p-hydroxybenzoylformate in the biosynthesis of L-(4-hydroxyphenyl)glycine and L-(3,5-dihydroxyphenyl)glycine, 2 non-proteinogenic amino acids occurring in the vancomycin group of antibiotics. The chain is 4-hydroxymandelate oxidase (hmo) from Amycolatopsis orientalis (Nocardia orientalis).